A 266-amino-acid chain; its full sequence is Shikimate dehydrogenase (NADP(+)) (266 aa).

Residues 14 to 16 (SLS) and Thr-61 each bind shikimate. Lys-65 serves as the catalytic Proton acceptor. Shikimate contacts are provided by Asn-85 and Asp-100. Residues 124–128 (GAGGA) and Ala-210 each bind NADP(+). Tyr-212 contributes to the shikimate binding site. Gly-233 provides a ligand contact to NADP(+).

Belongs to the shikimate dehydrogenase family. In terms of assembly, homodimer.

It catalyses the reaction shikimate + NADP(+) = 3-dehydroshikimate + NADPH + H(+). The protein operates within metabolic intermediate biosynthesis; chorismate biosynthesis; chorismate from D-erythrose 4-phosphate and phosphoenolpyruvate: step 4/7. Involved in the biosynthesis of the chorismate, which leads to the biosynthesis of aromatic amino acids. Catalyzes the reversible NADPH linked reduction of 3-dehydroshikimate (DHSA) to yield shikimate (SA). The protein is Shikimate dehydrogenase (NADP(+)) of Halobacterium salinarum (strain ATCC 29341 / DSM 671 / R1).